The sequence spans 154 residues: Superoxide dismutase [Cu-Zn] (154 aa).

The Cu cation site is built by His-47, His-49, and His-64. A disulfide bridge links Cys-58 with Cys-147. Zn(2+) contacts are provided by His-64, His-72, His-81, and Asp-84. His-121 contacts Cu cation. Basic and acidic residues predominate over residues 124-137 (TDDLGKGENEESKK). A disordered region spans residues 124 to 144 (TDDLGKGENEESKKTGNAGTR). Position 144 (Arg-144) interacts with substrate.

The protein belongs to the Cu-Zn superoxide dismutase family. In terms of assembly, homodimer. It depends on Cu cation as a cofactor. Zn(2+) serves as cofactor.

The protein localises to the cytoplasm. It catalyses the reaction 2 superoxide + 2 H(+) = H2O2 + O2. Its function is as follows. Destroys radicals which are normally produced within the cells and which are toxic to biological systems. The protein is Superoxide dismutase [Cu-Zn] (sod1) of Botryotinia fuckeliana (Noble rot fungus).